A 558-amino-acid chain; its full sequence is Glutamine--tRNA ligase (558 aa).

Positions 34-44 match the 'HIGH' region motif; the sequence is PEPNGYLHIGH. Residues 35–37 and 41–47 each bind ATP; these read EPN and HIGHAKS. Positions 67 and 212 each coordinate L-glutamine. Residues T231, 261 to 262, and 269 to 271 contribute to the ATP site; these read RL and LSK. The short motif at 268–272 is the 'KMSKS' region element; that stretch reads VLSKR.

The protein belongs to the class-I aminoacyl-tRNA synthetase family. In terms of assembly, monomer.

It localises to the cytoplasm. The catalysed reaction is tRNA(Gln) + L-glutamine + ATP = L-glutaminyl-tRNA(Gln) + AMP + diphosphate. The polypeptide is Glutamine--tRNA ligase (Pseudoalteromonas atlantica (strain T6c / ATCC BAA-1087)).